The chain runs to 114 residues: Protachykinin (114 aa).

An N-terminal signal peptide occupies residues 1–19 (MKFLLPSIVIFLVLCQVFG). Positions 20–55 (EELGPKEDLDYWTGSNQVQDEWLQADPFREIIRRMT) are excised as a propeptide. A methionine amide mark is found at Met67 and Met91.

The protein belongs to the tachykinin family. As to expression, expressed in all parts of the brain, with robust expression in the olfactory bulbs and tracts, moderate expression in the hypothalamus and posterior brain, and weak expression in the telencephalon-preoptic region and optic tectum-thalamus. Also expressed in nerve fibers, intestine, testes and pituitary gland. Not expressed in the liver or kidneys.

It is found in the secreted. Its function is as follows. Tachykinins are active peptides which excite neurons, evoke behavioral responses, are potent vasodilators and secretagogues, and contract (directly or indirectly) many smooth muscles. In terms of biological role, substance P produces a voltage-dependent inhibition of calcium current in retinal bipolar cells. It can enhance learning and memory, may regulate social approach and feeding behaviors, and can accelerate the functional recovery in postural balance in response to light after unilateral labyrinthectomy. This is Protachykinin from Carassius auratus (Goldfish).